The chain runs to 569 residues: Laccase-14 (569 aa).

A signal peptide spans 1–33; it reads MEFKLNIPNTIIKTLQTIVFFLFVLLAFQIAEA. 2 Plastocyanin-like domains span residues 41–157 and 167–320; these read KIKS…PKRG and REIP…YKGD. The N-linked (GlcNAc...) asparagine glycan is linked to N87. 4 residues coordinate Cu cation: H91, H93, H136, and H138. 7 N-linked (GlcNAc...) asparagine glycosylation sites follow: N190, N249, N336, N374, N395, N430, and N452. Residues 420–553 enclose the Plastocyanin-like 3 domain; the sequence is DFPRNPPTKF…NTVFIVKDGP (134 aa). Residues H470, H473, H475, H532, C533, H534, H538, and M543 each coordinate Cu cation.

This sequence belongs to the multicopper oxidase family. The cofactor is Cu cation. In terms of tissue distribution, expressed at low levels in flowers and siliques.

Its subcellular location is the secreted. The protein localises to the extracellular space. It is found in the apoplast. It catalyses the reaction 4 hydroquinone + O2 = 4 benzosemiquinone + 2 H2O. Lignin degradation and detoxification of lignin-derived products. This Arabidopsis thaliana (Mouse-ear cress) protein is Laccase-14 (LAC14).